Here is a 274-residue protein sequence, read N- to C-terminus: NH(3)-dependent NAD(+) synthetase (274 aa).

46-53 (GISGGQDS) contacts ATP. A Mg(2+)-binding site is contributed by Asp-52. Position 140 (Arg-140) interacts with deamido-NAD(+). Residue Thr-160 participates in ATP binding. Glu-165 is a Mg(2+) binding site. Deamido-NAD(+)-binding residues include Lys-173 and Asp-180. ATP contacts are provided by Lys-189 and Thr-211. 260–261 (HK) lines the deamido-NAD(+) pocket.

The protein belongs to the NAD synthetase family. Homodimer.

It carries out the reaction deamido-NAD(+) + NH4(+) + ATP = AMP + diphosphate + NAD(+) + H(+). It participates in cofactor biosynthesis; NAD(+) biosynthesis; NAD(+) from deamido-NAD(+) (ammonia route): step 1/1. In terms of biological role, catalyzes the ATP-dependent amidation of deamido-NAD to form NAD. Uses ammonia as a nitrogen source. This is NH(3)-dependent NAD(+) synthetase from Streptococcus sanguinis (strain SK36).